The primary structure comprises 259 residues: Protein-L-isoaspartate O-methyltransferase 1 (259 aa).

Residue Ser-109 is part of the active site.

It belongs to the methyltransferase superfamily. L-isoaspartyl/D-aspartyl protein methyltransferase family.

It is found in the cytoplasm. It catalyses the reaction [protein]-L-isoaspartate + S-adenosyl-L-methionine = [protein]-L-isoaspartate alpha-methyl ester + S-adenosyl-L-homocysteine. Functionally, catalyzes the methyl esterification of L-isoaspartyl residues in peptides and proteins that result from spontaneous decomposition of normal L-aspartyl and L-asparaginyl residues. It plays a role in the repair and/or degradation of damaged proteins. In Cupriavidus necator (strain ATCC 17699 / DSM 428 / KCTC 22496 / NCIMB 10442 / H16 / Stanier 337) (Ralstonia eutropha), this protein is Protein-L-isoaspartate O-methyltransferase 1.